The following is a 128-amino-acid chain: Large ribosomal subunit protein bL19 (128 aa).

Belongs to the bacterial ribosomal protein bL19 family.

Its function is as follows. This protein is located at the 30S-50S ribosomal subunit interface and may play a role in the structure and function of the aminoacyl-tRNA binding site. This Mesoplasma florum (strain ATCC 33453 / NBRC 100688 / NCTC 11704 / L1) (Acholeplasma florum) protein is Large ribosomal subunit protein bL19.